We begin with the raw amino-acid sequence, 342 residues long: Anthranilate phosphoribosyltransferase (342 aa).

5-phospho-alpha-D-ribose 1-diphosphate is bound by residues Gly79, 82 to 83 (GD), Thr87, 89 to 92 (NIST), 107 to 115 (KHCNQRISS), and Ser119. Gly79 lines the anthranilate pocket. Position 91 (Ser91) interacts with Mg(2+). Anthranilate is bound at residue Asn110. Arg165 serves as a coordination point for anthranilate. Asp223 and Glu224 together coordinate Mg(2+).

It belongs to the anthranilate phosphoribosyltransferase family. Homodimer. Mg(2+) is required as a cofactor.

The catalysed reaction is N-(5-phospho-beta-D-ribosyl)anthranilate + diphosphate = 5-phospho-alpha-D-ribose 1-diphosphate + anthranilate. It participates in amino-acid biosynthesis; L-tryptophan biosynthesis; L-tryptophan from chorismate: step 2/5. Functionally, catalyzes the transfer of the phosphoribosyl group of 5-phosphorylribose-1-pyrophosphate (PRPP) to anthranilate to yield N-(5'-phosphoribosyl)-anthranilate (PRA). The sequence is that of Anthranilate phosphoribosyltransferase from Buchnera aphidicola subsp. Acyrthosiphon pisum (strain 5A).